The following is a 422-amino-acid chain: 3-isopropylmalate dehydratase large subunit (422 aa).

Positions 294, 354, and 357 each coordinate [4Fe-4S] cluster.

The protein belongs to the aconitase/IPM isomerase family. LeuC type 2 subfamily. In terms of assembly, heterodimer of LeuC and LeuD. [4Fe-4S] cluster is required as a cofactor.

The enzyme catalyses (2R,3S)-3-isopropylmalate = (2S)-2-isopropylmalate. It functions in the pathway amino-acid biosynthesis; L-leucine biosynthesis; L-leucine from 3-methyl-2-oxobutanoate: step 2/4. In terms of biological role, catalyzes the isomerization between 2-isopropylmalate and 3-isopropylmalate, via the formation of 2-isopropylmaleate. This Mycolicibacterium smegmatis (strain ATCC 700084 / mc(2)155) (Mycobacterium smegmatis) protein is 3-isopropylmalate dehydratase large subunit.